Reading from the N-terminus, the 238-residue chain is Large ribosomal subunit protein uL2 (238 aa).

Residues 203–223 form a disordered region; it reads GGGAWKHPGKPTTVSRNAPPG.

Belongs to the universal ribosomal protein uL2 family. As to quaternary structure, part of the 50S ribosomal subunit. Forms a bridge to the 30S subunit in the 70S ribosome.

Functionally, one of the primary rRNA binding proteins. Required for association of the 30S and 50S subunits to form the 70S ribosome, for tRNA binding and peptide bond formation. It has been suggested to have peptidyltransferase activity; this is somewhat controversial. Makes several contacts with the 16S rRNA in the 70S ribosome. The protein is Large ribosomal subunit protein uL2 of Methanosarcina barkeri (strain Fusaro / DSM 804).